The sequence spans 202 residues: ATP synthase subunit b (202 aa).

Residues 9–29 (TTLSLCLAVCVVVIAVGTGWA) form a helical membrane-spanning segment.

It belongs to the ATPase B chain family. As to quaternary structure, F-type ATPases have 2 components, F(1) - the catalytic core - and F(0) - the membrane proton channel. F(1) has five subunits: alpha(3), beta(3), gamma(1), delta(1), epsilon(1). F(0) has three main subunits: a(1), b(2) and c(10-14). The alpha and beta chains form an alternating ring which encloses part of the gamma chain. F(1) is attached to F(0) by a central stalk formed by the gamma and epsilon chains, while a peripheral stalk is formed by the delta and b chains.

The protein resides in the cell inner membrane. Its function is as follows. F(1)F(0) ATP synthase produces ATP from ADP in the presence of a proton or sodium gradient. F-type ATPases consist of two structural domains, F(1) containing the extramembraneous catalytic core and F(0) containing the membrane proton channel, linked together by a central stalk and a peripheral stalk. During catalysis, ATP synthesis in the catalytic domain of F(1) is coupled via a rotary mechanism of the central stalk subunits to proton translocation. In terms of biological role, component of the F(0) channel, it forms part of the peripheral stalk, linking F(1) to F(0). This Pelobacter propionicus (strain DSM 2379 / NBRC 103807 / OttBd1) protein is ATP synthase subunit b.